Here is a 642-residue protein sequence, read N- to C-terminus: Threonine--tRNA ligase (642 aa).

A TGS domain is found at 1–61; that stretch reads MPAITLPDGS…AADAQVVFVT (61 aa). Residues 243-536 are catalytic; sequence DHRRLGKEMD…LIEQYAGRFP (294 aa). Zn(2+)-binding residues include C336, H387, and H513.

The protein belongs to the class-II aminoacyl-tRNA synthetase family. As to quaternary structure, homodimer. The cofactor is Zn(2+).

It localises to the cytoplasm. It carries out the reaction tRNA(Thr) + L-threonine + ATP = L-threonyl-tRNA(Thr) + AMP + diphosphate + H(+). Functionally, catalyzes the attachment of threonine to tRNA(Thr) in a two-step reaction: L-threonine is first activated by ATP to form Thr-AMP and then transferred to the acceptor end of tRNA(Thr). Also edits incorrectly charged L-seryl-tRNA(Thr). The chain is Threonine--tRNA ligase from Granulibacter bethesdensis (strain ATCC BAA-1260 / CGDNIH1).